Reading from the N-terminus, the 425-residue chain is UDP-N-acetylglucosamine 1-carboxyvinyltransferase (425 aa).

22–23 (KN) provides a ligand contact to phosphoenolpyruvate. R91 contributes to the UDP-N-acetyl-alpha-D-glucosamine binding site. The Proton donor role is filled by C115. At C115 the chain carries 2-(S-cysteinyl)pyruvic acid O-phosphothioketal. UDP-N-acetyl-alpha-D-glucosamine contacts are provided by residues 120 to 124 (RPVDL), D309, and I331.

Belongs to the EPSP synthase family. MurA subfamily.

It localises to the cytoplasm. The enzyme catalyses phosphoenolpyruvate + UDP-N-acetyl-alpha-D-glucosamine = UDP-N-acetyl-3-O-(1-carboxyvinyl)-alpha-D-glucosamine + phosphate. Its pathway is cell wall biogenesis; peptidoglycan biosynthesis. Its function is as follows. Cell wall formation. Adds enolpyruvyl to UDP-N-acetylglucosamine. The protein is UDP-N-acetylglucosamine 1-carboxyvinyltransferase of Akkermansia muciniphila (strain ATCC BAA-835 / DSM 22959 / JCM 33894 / BCRC 81048 / CCUG 64013 / CIP 107961 / Muc).